The sequence spans 131 residues: Small ribosomal subunit protein uS8 (131 aa).

This sequence belongs to the universal ribosomal protein uS8 family. As to quaternary structure, part of the 30S ribosomal subunit. Contacts proteins S5 and S12.

In terms of biological role, one of the primary rRNA binding proteins, it binds directly to 16S rRNA central domain where it helps coordinate assembly of the platform of the 30S subunit. This chain is Small ribosomal subunit protein uS8, found in Malacoplasma penetrans (strain HF-2) (Mycoplasma penetrans).